We begin with the raw amino-acid sequence, 718 residues long: Telomeric repeat-binding factor 2 (718 aa).

Disordered stretches follow at residues 1–22 (MAAKRSRAAMEEQEKTSTRSDD) and 219–286 (NSER…GAPE). Basic and acidic residues-rich tracts occupy residues 8–22 (AAMEEQEKTSTRSDD) and 219–228 (NSERAEEPKR). A TRFH dimerization region spans residues 24 to 220 (EQAVNRWVLQ…LVTMMKSLNS (197 aa)). Repeat copies occupy residues 257–269 (GTLRRAETAGGVA), 270–282 (GAPSCPEMAKDPT), 283–295 (GAPEHVGTVKDAV), 296–308 (RAPCPAESTEDSQ), 309–321 (GTPRCAETARDVM), 322–334 (GAPSPSEMTKDLL), 335–347 (GAPKCTETARDVV), 348–360 (RAPSPAESTKDPV), 361–373 (GTPGHAETARDVA), 374–386 (RAPSPAETTKNLP), 387–399 (GAPECADTVKNTV), 400–412 (RAPSPAERRKDLV), 413–425 (RAPKRAETARDVV), 426–438 (RAPSPAERVKDTA), and 439–451 (GASEPMKSASYPT). Residues 257 to 451 (GTLRRAETAG…EPMKSASYPT (195 aa)) are 15 X 13 AA approximate tandem repeats. 2 disordered regions span residues 342 to 455 (TARD…ASQP) and 524 to 641 (FNKL…WSDE). Residues 405–425 (AERRKDLVRAPKRAETARDVV) show a composition bias toward basic and acidic residues. Over residues 533–543 (PSPQQMSPSVS) the composition is skewed to polar residues. The Nuclear localization signal motif lies at 545–550 (RTKRRK). Over residues 584 to 595 (SQCSKSSESPDS) the composition is skewed to low complexity. Residues 615–630 (PVSTKRSSQQRWNSSY) show a composition bias toward polar residues. The 54-residue stretch at 664-717 (KKQKWTVQESEWIKDGVRKYGEGRWKTISEKYPFQNRTSVQIKDRYRTMKKLGI) folds into the HTH myb-type domain. Positions 688–713 (WKTISEKYPFQNRTSVQIKDRYRTMK) form a DNA-binding region, H-T-H motif.

As to quaternary structure, homodimer. Component of the shelterin complex (telosome). Interacts with TERF2IP/RAP1. As to expression, highly expressed in embryo.

The protein resides in the nucleus. It is found in the chromosome. The protein localises to the telomere. Binds the telomeric double-stranded 5'-TTAGGG-3' repeat and plays a central role in telomere maintenance and protection against end-to-end fusion of chromosomes. In addition to its telomeric DNA-binding role, required to recruit a number of factors and enzymes required for telomere protection, including the shelterin complex, TERF2IP/RAP1 and DCLRE1B/Apollo. Component of the shelterin complex (telosome) that is involved in the regulation of telomere length and protection. Shelterin associates with arrays of double-stranded 5'-TTAGGG-3' repeats added by telomerase and protects chromosome ends; without its protective activity, telomeres are no longer hidden from the DNA damage surveillance and chromosome ends are inappropriately processed by DNA repair pathways. Together with DCLRE1B/Apollo, plays a key role in telomeric loop (T loop) formation by generating 3' single-stranded overhang at the leading end telomeres: T loops have been proposed to protect chromosome ends from degradation and repair. Required both to recruit DCLRE1B/Apollo to telomeres and activate the exonuclease activity of DCLRE1B/Apollo. Together with DCLRE1B/Apollo, required to control the amount of DNA topoisomerase (TOP1, TOP2A and TOP2B) needed for telomere replication during fork passage and prevent aberrant telomere topology. Recruits TERF2IP/RAP1 to telomeres, thereby participating in to repressing homology-directed repair (HDR), which can affect telomere length. This chain is Telomeric repeat-binding factor 2 (TERF2), found in Gallus gallus (Chicken).